A 251-amino-acid polypeptide reads, in one-letter code: Triosephosphate isomerase (251 aa).

9 to 11 is a substrate binding site; sequence NWK. His-95 serves as the catalytic Electrophile. The active-site Proton acceptor is the Glu-167. Substrate is bound by residues Gly-173, Ser-213, and 234–235; that span reads GG.

This sequence belongs to the triosephosphate isomerase family. Homodimer.

It localises to the cytoplasm. It catalyses the reaction D-glyceraldehyde 3-phosphate = dihydroxyacetone phosphate. Its pathway is carbohydrate biosynthesis; gluconeogenesis. It participates in carbohydrate degradation; glycolysis; D-glyceraldehyde 3-phosphate from glycerone phosphate: step 1/1. Involved in the gluconeogenesis. Catalyzes stereospecifically the conversion of dihydroxyacetone phosphate (DHAP) to D-glyceraldehyde-3-phosphate (G3P). This Ligilactobacillus salivarius (strain UCC118) (Lactobacillus salivarius) protein is Triosephosphate isomerase.